The sequence spans 337 residues: Deoxyhypusine hydroxylase (337 aa).

HEAT-like PBS-type repeat units follow at residues 73-99 (LKHELAYCLGQTGNTAAVKPLRQVLSD) and 106-132 (CRHEAAEALGALGWADNLDILREYRDR). Positions 75, 76, 108, and 109 each coordinate Fe cation. Over residues 156 to 165 (AERQKEKLRP) the composition is skewed to basic and acidic residues. Residues 156–183 (AERQKEKLRPSDFASIDPAPPMPESDKE) are disordered. HEAT-like PBS-type repeat units lie at residues 202–235 (SRYRAMFALRDLASPPDLPTATPAVLALAKGLSD), 240–266 (FRHEIAFVFGQLSHPASIPALTEALSN), and 273–300 (VRHEAAEALGSLGEKDGVEDTLRKFLHD). Fe cation-binding residues include H242, E243, H275, and E276.

It belongs to the deoxyhypusine hydroxylase family. It depends on Fe(2+) as a cofactor.

It is found in the cytoplasm. The protein localises to the nucleus. The enzyme catalyses [eIF5A protein]-deoxyhypusine + AH2 + O2 = [eIF5A protein]-hypusine + A + H2O. Its pathway is protein modification; eIF5A hypusination. In terms of biological role, catalyzes the hydroxylation of the N(6)-(4-aminobutyl)-L-lysine intermediate to form hypusine, an essential post-translational modification only found in mature eIF-5A factor. The sequence is that of Deoxyhypusine hydroxylase from Gibberella zeae (strain ATCC MYA-4620 / CBS 123657 / FGSC 9075 / NRRL 31084 / PH-1) (Wheat head blight fungus).